Reading from the N-terminus, the 218-residue chain is Small ribosomal subunit protein uS3c (218 aa).

The KH type-2 domain maps to 47 to 118 (VQKNMKTSSG…KLNIAITRIE (72 aa)).

Belongs to the universal ribosomal protein uS3 family. In terms of assembly, part of the 30S ribosomal subunit.

It is found in the plastid. The protein resides in the chloroplast. In Helianthus annuus (Common sunflower), this protein is Small ribosomal subunit protein uS3c (rps3).